The sequence spans 447 residues: Adenylosuccinate synthetase (447 aa).

Residues 12–18 and 40–42 each bind GTP; these read GDEGKGK and GHT. Asp-13 functions as the Proton acceptor in the catalytic mechanism. 2 residues coordinate Mg(2+): Asp-13 and Gly-40. Residues 13–16, 38–41, Thr-128, Arg-142, Gln-223, Thr-238, and Arg-302 each bind IMP; these read DEGK and NAGH. Catalysis depends on His-41, which acts as the Proton donor. Position 298-304 (298-304) interacts with substrate; that stretch reads TTTGRKR. GTP is bound by residues Arg-304, 330-332, and 412-414; these read KLD and SLG.

This sequence belongs to the adenylosuccinate synthetase family. Homodimer. The cofactor is Mg(2+).

The protein resides in the cytoplasm. It catalyses the reaction IMP + L-aspartate + GTP = N(6)-(1,2-dicarboxyethyl)-AMP + GDP + phosphate + 2 H(+). It functions in the pathway purine metabolism; AMP biosynthesis via de novo pathway; AMP from IMP: step 1/2. Plays an important role in the de novo pathway of purine nucleotide biosynthesis. Catalyzes the first committed step in the biosynthesis of AMP from IMP. The protein is Adenylosuccinate synthetase of Nostoc punctiforme (strain ATCC 29133 / PCC 73102).